A 525-amino-acid chain; its full sequence is NADH-quinone oxidoreductase subunit N (525 aa).

14 helical membrane passes run 26 to 46 (LSPM…DAFA), 53 to 73 (VLQP…VVLL), 90 to 110 (PTLF…LLVA), 143 to 163 (VQTE…LFVA), 167 to 187 (LLVM…LCGL), 202 to 222 (YFLL…FAYG), 246 to 266 (LYLS…AAPF), 278 to 298 (PTPI…GALL), 314 to 334 (PVIW…ALTQ), 341 to 361 (LAYS…GSNI), 368 to 388 (MFYL…VSLV), 411 to 431 (LAGT…TSGF), 449 to 469 (LVVV…RVIV), and 487 to 507 (PTLT…LGVA).

This sequence belongs to the complex I subunit 2 family. As to quaternary structure, NDH-1 is composed of 14 different subunits. Subunits NuoA, H, J, K, L, M, N constitute the membrane sector of the complex.

The protein resides in the cell membrane. The catalysed reaction is a quinone + NADH + 5 H(+)(in) = a quinol + NAD(+) + 4 H(+)(out). In terms of biological role, NDH-1 shuttles electrons from NADH, via FMN and iron-sulfur (Fe-S) centers, to quinones in the respiratory chain. The immediate electron acceptor for the enzyme in this species is believed to be a menaquinone. Couples the redox reaction to proton translocation (for every two electrons transferred, four hydrogen ions are translocated across the cytoplasmic membrane), and thus conserves the redox energy in a proton gradient. This chain is NADH-quinone oxidoreductase subunit N, found in Parafrankia sp. (strain EAN1pec).